The sequence spans 314 residues: Bifunctional pinoresinol-lariciresinol reductase (314 aa).

NADP(+)-binding positions include Gly-10–Gly-16, Arg-35, and Lys-44. Residue Lys-138 is the Proton acceptor of the active site. Arg-142 contributes to the NADP(+) binding site. A substrate-binding site is contributed by His-270.

The protein belongs to the NmrA-type oxidoreductase family. Isoflavone reductase subfamily. Dimer.

The enzyme catalyses (+)-lariciresinol + NADP(+) = (+)-pinoresinol + NADPH + H(+). The catalysed reaction is (+)-secoisolariciresinol + NADP(+) = (-)-lariciresinol + NADPH + H(+). Reductase involved in the lignan justicidin B biosynthesis. Catalyzes the enantioselective conversion of (+)-pinoresinol into (+)-lariciresinol and of (-)-lariciresinol into (+)-secoisolariciresinol. Low activity with the other enantiomers. Abstracts the 4R-hydride from the NADPH cofactor during catalysis. This Linum perenne (Perennial flax) protein is Bifunctional pinoresinol-lariciresinol reductase (PLR_Lp1).